We begin with the raw amino-acid sequence, 66 residues long: Large ribosomal subunit protein uL29 (66 aa).

It belongs to the universal ribosomal protein uL29 family.

This Bartonella henselae (strain ATCC 49882 / DSM 28221 / CCUG 30454 / Houston 1) (Rochalimaea henselae) protein is Large ribosomal subunit protein uL29.